A 339-amino-acid chain; its full sequence is Uroporphyrinogen decarboxylase (339 aa).

Substrate is bound by residues 23–27 (RQAGR), Asp-72, Tyr-147, Thr-202, and His-315.

This sequence belongs to the uroporphyrinogen decarboxylase family. As to quaternary structure, homodimer.

It is found in the cytoplasm. It catalyses the reaction uroporphyrinogen III + 4 H(+) = coproporphyrinogen III + 4 CO2. Its pathway is porphyrin-containing compound metabolism; protoporphyrin-IX biosynthesis; coproporphyrinogen-III from 5-aminolevulinate: step 4/4. Its function is as follows. Catalyzes the decarboxylation of four acetate groups of uroporphyrinogen-III to yield coproporphyrinogen-III. This Geotalea uraniireducens (strain Rf4) (Geobacter uraniireducens) protein is Uroporphyrinogen decarboxylase.